Reading from the N-terminus, the 469-residue chain is Calcium/calmodulin-dependent protein kinase type IV (469 aa).

2 positions are modified to phosphoserine; by autocatalysis: Ser11 and Ser12. In terms of domain architecture, Protein kinase spans 42–296 (FEVESELGRG…TFQALQHPWV (255 aa)). Residues 48–56 (LGRGATSIV) and Lys71 contribute to the ATP site. Thr53 is a glycosylation site (O-linked (GlcNAc) threonine). A glycan (O-linked (GlcNAc) serine) is linked at Ser54. The O-linked (GlcNAc) serine glycan is linked to Ser133. Asp160 acts as the Proton acceptor in catalysis. O-linked (GlcNAc) serine glycosylation occurs at Ser185. At Thr196 the chain carries Phosphothreonine. The interval 297–336 (TGKAANFVHMDTAQKKLQEFNARRKLKAAVKAVVASSRLG) is autoinhibitory domain. The interval 302–319 (NFVHMDTAQKKLQEFNAR) is PP2A-binding. The calmodulin-binding stretch occupies residues 318–337 (ARRKLKAAVKAVVASSRLGS). A Phosphoserine; by autocatalysis modification is found at Ser332. Residues 336–469 (GSASSSHTSI…PQQDAIQPEY (134 aa)) are disordered. A Phosphoserine modification is found at Ser337. O-linked (GlcNAc) serine glycans are attached at residues Ser340, Ser341, and Ser352. Over residues 360 to 374 (DAKDSTDLLGKKMQE) the composition is skewed to basic and acidic residues. Acidic residues predominate over residues 375 to 388 (EDQEEDQVEAEASA). The segment covering 389–409 (DEMRKLQSEEVEKDAGVKEEE) has biased composition (basic and acidic residues). A compositionally biased stretch (acidic residues) spans 417–426 (DPEDELETDD). Over residues 427–441 (PEMKRDSEEKLKSVE) the composition is skewed to basic and acidic residues. Residues Ser433 and Ser439 each carry the phosphoserine modification. Over residues 442-453 (EEMDPMTEEEAP) the composition is skewed to acidic residues.

It belongs to the protein kinase superfamily. CAMK Ser/Thr protein kinase family. CaMK subfamily. As to quaternary structure, monomer. Interacts with protein phosphatase 2A (PPP2CA/PPP2CB); the interaction is mutually exclusive with binding to Ca(2+)/calmodulin. In terms of processing, phosphorylated by CaMKK1 and CaMKK2 on Thr-196. Dephosphorylated by protein phosphatase 2A. Autophosphorylated on Ser-11 and Ser-12. Glycosylation at Ser-185 modulates the phosphorylation of CaMK4 at Thr-196 and negatively regulates its activity toward CREB1 in basal conditions and during early inomycin stimulation. Expressed in brain and testis.

It is found in the cytoplasm. It localises to the nucleus. It catalyses the reaction L-seryl-[protein] + ATP = O-phospho-L-seryl-[protein] + ADP + H(+). The enzyme catalyses L-threonyl-[protein] + ATP = O-phospho-L-threonyl-[protein] + ADP + H(+). Its activity is regulated as follows. Activated by Ca(2+)/calmodulin. Binding of calmodulin results in conformational change that relieves intrasteric autoinhibition and allows phosphorylation of Thr-196 within the activation loop by CaMKK1 or CaMKK2. Phosphorylation of Thr-196 results in a 10-20-fold increase in total activity to generate Ca(2+)/calmodulin-independent activity. Autophosphorylation of the N-terminus Ser-11 and Ser-12 is required for full activation. Inactivated by protein phosphatase 2A (PPP2CA/PPP2CB) which dephosphorylates Thr-196, thereby terminating autonomous activity and helping to maintain the enzyme in its autoinhibited state. In terms of biological role, calcium/calmodulin-dependent protein kinase that operates in the calcium-triggered CaMKK-CaMK4 signaling cascade and regulates, mainly by phosphorylation, the activity of several transcription activators, such as CREB1, MEF2D, JUN and RORA, which play pivotal roles in immune response, inflammation, and memory consolidation. In the thymus, regulates the CD4(+)/CD8(+) double positive thymocytes selection threshold during T-cell ontogeny. In CD4 memory T-cells, is required to link T-cell antigen receptor (TCR) signaling to the production of IL2, IFNG and IL4 (through the regulation of CREB and MEF2). Regulates the differentiation and survival phases of osteoclasts and dendritic cells (DCs). Mediates DCs survival by linking TLR4 and the regulation of temporal expression of BCL2. Phosphorylates the transcription activator CREB1 on 'Ser-133' in hippocampal neuron nuclei and contribute to memory consolidation and long term potentiation (LTP) in the hippocampus. Can activate the MAP kinases MAPK1/ERK2, MAPK8/JNK1 and MAPK14/p38 and stimulate transcription through the phosphorylation of ELK1 and ATF2. Can also phosphorylate in vitro CREBBP, PRM2, MEF2A and STMN1/OP18. May be involved in spermatogenesis. The polypeptide is Calcium/calmodulin-dependent protein kinase type IV (Camk4) (Mus musculus (Mouse)).